A 248-amino-acid chain; its full sequence is 4-hydroxy-tetrahydrodipicolinate reductase (248 aa).

NAD(+)-binding positions include 74–76 (GTT) and 99–102 (SANF). H134 acts as the Proton donor/acceptor in catalysis. H135 is a (S)-2,3,4,5-tetrahydrodipicolinate binding site. Residue K138 is the Proton donor of the active site. 144-145 (GT) serves as a coordination point for (S)-2,3,4,5-tetrahydrodipicolinate.

Belongs to the DapB family.

The protein resides in the cytoplasm. The enzyme catalyses (S)-2,3,4,5-tetrahydrodipicolinate + NAD(+) + H2O = (2S,4S)-4-hydroxy-2,3,4,5-tetrahydrodipicolinate + NADH + H(+). The catalysed reaction is (S)-2,3,4,5-tetrahydrodipicolinate + NADP(+) + H2O = (2S,4S)-4-hydroxy-2,3,4,5-tetrahydrodipicolinate + NADPH + H(+). The protein operates within amino-acid biosynthesis; L-lysine biosynthesis via DAP pathway; (S)-tetrahydrodipicolinate from L-aspartate: step 4/4. In terms of biological role, catalyzes the conversion of 4-hydroxy-tetrahydrodipicolinate (HTPA) to tetrahydrodipicolinate. The sequence is that of 4-hydroxy-tetrahydrodipicolinate reductase from Chlorobium phaeobacteroides (strain BS1).